A 459-amino-acid polypeptide reads, in one-letter code: Probable ECA polymerase (459 aa).

11 helical membrane passes run 3 to 23 (LTQFGGLFVVYLISLVFILTL), 37 to 57 (IFFSLLYLLTFYFGFPLTCLL), 65 to 85 (VVPVDALLHALLASTCFYGIY), 119 to 139 (LASVAVVTVGLFFMQNGFLLF), 154 to 174 (GVALKRFFYFFIPAMLVVYFL), 181 to 201 (WLFFLISTVAFGILTYVVVGG), 206 to 226 (IIIAFALFLFIGIVRGWITLW), 227 to 247 (MLVTAGAIGIVGMFWLALKRY), 340 to 360 (LVVMGGVLFIPVGAIVVGLII), 377 to 397 (YKAAILQAFCFGAIFNMIVLA), and 409 to 429 (VFFCIIFGLCLVIAKLLYWLF).

Belongs to the WzyE family. Probably part of a complex composed of WzxE, WzyE and WzzE.

Its subcellular location is the cell inner membrane. It functions in the pathway bacterial outer membrane biogenesis; enterobacterial common antigen biosynthesis. Functionally, probably involved in the polymerization of enterobacterial common antigen (ECA) trisaccharide repeat units. The chain is Probable ECA polymerase from Photorhabdus laumondii subsp. laumondii (strain DSM 15139 / CIP 105565 / TT01) (Photorhabdus luminescens subsp. laumondii).